Consider the following 233-residue polypeptide: Histidinol dehydrogenase (233 aa).

Substrate-binding residues include Ser-31, Gln-53, and His-56. Zn(2+) is bound by residues Gln-53 and His-56. Active-site proton acceptor residues include Glu-121 and His-122. Positions 122, 155, 209, and 214 each coordinate substrate. A Zn(2+)-binding site is contributed by Asp-155. Zn(2+) is bound at residue His-214.

The protein belongs to the histidinol dehydrogenase family. The cofactor is Zn(2+).

It carries out the reaction L-histidinol + 2 NAD(+) + H2O = L-histidine + 2 NADH + 3 H(+). It participates in amino-acid biosynthesis; L-histidine biosynthesis; L-histidine from 5-phospho-alpha-D-ribose 1-diphosphate: step 9/9. In terms of biological role, catalyzes the sequential NAD-dependent oxidations of L-histidinol to L-histidinaldehyde and then to L-histidine. The polypeptide is Histidinol dehydrogenase (hisD) (Thiocapsa roseopersicina).